The following is a 238-amino-acid chain: Lipoarabinomannan carrier protein LprG (238 aa).

An N-terminal signal peptide occupies residues 1–26 (MQAPKHHRRLFAVLATLNTATAVIAG). C27 carries N-palmitoyl cysteine lipidation. C27 carries S-diacylglycerol cysteine lipidation.

The protein belongs to the LppX/LprAFG lipoprotein family. Post-translationally, modified by Lgt on Cys-27 with an S-linked diacylglyceral, signal peptide is removed by LspA, Cys-27 is further modifed with a fatty acid on its amino group by Lnt yielding a triacylated protein. Probably glycosylated, which is required for T-cell activation.

Its subcellular location is the cell inner membrane. The protein resides in the secreted. The protein localises to the cell wall. In terms of biological role, helps membrane protein ML0556 (P55) transport triacylglycerides (TAG) across the inner cell membrane into the periplasm and probably ultimately to the outer membrane. Binds TAG in its hydrophobic cavity and transfers it between lipid bilayers. TAG probably regulates lipid metabolism and growth regulation and plays a structural role in the outer membrane. Binds di- and triacylated phosphatidyl-myo-inositol mannosides (PIMs), and glycolipid lipoglycan modulins lipoarabinomannan (LAM) and lipomannan (LM), facilitating their recognition by TLR2. Required for activity of drug efflux transporter ML0556. Required, probably with ML0556, for normal surface localization of LAM. Constitutes a host TLR2 agonist (toll-like receptor) able to stimulate proliferation of CD4+ T-cells derived from a human leprosy patient following protein processing/presentation by MHC class II molecules in peripheral blood mononuclear cells. This Mycobacterium leprae (strain TN) protein is Lipoarabinomannan carrier protein LprG.